The chain runs to 685 residues: Augmin complex subunit dgt5 (685 aa).

Coiled-coil stretches lie at residues 87-165 and 342-379; these read LQRY…NKIQ and NMRN…DLKL.

In terms of assembly, component of the augmin complex composed of dgt2, dgt3, dgt4, dgt5, dgt6, msd1, msd5 and wac. The complex interacts directly or indirectly with microtubules and is required for centrosome-independent generation of spindle microtubules.

The protein localises to the cytoplasm. It localises to the cytoskeleton. It is found in the spindle. The protein resides in the chromosome. Its subcellular location is the centromere. The protein localises to the kinetochore. It localises to the microtubule organizing center. It is found in the centrosome. In terms of biological role, as part of the augmin complex, plays a role in centrosome-independent generation of spindle microtubules. The complex is required for mitotic spindle assembly through its involvement in localizing gamma-tubulin to spindle microtubules. The chain is Augmin complex subunit dgt5 from Drosophila melanogaster (Fruit fly).